The sequence spans 440 residues: Chromosomal replication initiator protein DnaA (440 aa).

A domain I, interacts with DnaA modulators region spans residues 1–74 (MNPSQILENL…VQSGNKAIIN (74 aa)). Positions 74–99 (NIQAQSAKQSNKSTKIDIAHIKAQST) are domain II. The interval 100 to 316 (ILNPSFTFDS…GIIISLNAYA (217 aa)) is domain III, AAA+ region. The ATP site is built by G146, G148, K149, and T150. The domain IV, binds dsDNA stretch occupies residues 317 to 440 (TILGQEITLE…KNKILVKSQS (124 aa)).

The protein belongs to the DnaA family. In terms of assembly, oligomerizes as a right-handed, spiral filament on DNA at oriC.

Its subcellular location is the cytoplasm. Plays an essential role in the initiation and regulation of chromosomal replication. ATP-DnaA binds to the origin of replication (oriC) to initiate formation of the DNA replication initiation complex once per cell cycle. Binds the DnaA box (a 9 base pair repeat at the origin) and separates the double-stranded (ds)DNA. Forms a right-handed helical filament on oriC DNA; dsDNA binds to the exterior of the filament while single-stranded (ss)DNA is stabiized in the filament's interior. The ATP-DnaA-oriC complex binds and stabilizes one strand of the AT-rich DNA unwinding element (DUE), permitting loading of DNA polymerase. After initiation quickly degrades to an ADP-DnaA complex that is not apt for DNA replication. Binds acidic phospholipids. In Campylobacter jejuni subsp. jejuni serotype O:23/36 (strain 81-176), this protein is Chromosomal replication initiator protein DnaA.